The following is a 290-amino-acid chain: 4-hydroxy-tetrahydrodipicolinate synthase (290 aa).

Thr-42 is a pyruvate binding site. Tyr-129 (proton donor/acceptor) is an active-site residue. Lys-157 (schiff-base intermediate with substrate) is an active-site residue. Residue Ile-198 participates in pyruvate binding.

It belongs to the DapA family. In terms of assembly, homotetramer; dimer of dimers.

Its subcellular location is the cytoplasm. The catalysed reaction is L-aspartate 4-semialdehyde + pyruvate = (2S,4S)-4-hydroxy-2,3,4,5-tetrahydrodipicolinate + H2O + H(+). Its pathway is amino-acid biosynthesis; L-lysine biosynthesis via DAP pathway; (S)-tetrahydrodipicolinate from L-aspartate: step 3/4. Its function is as follows. Catalyzes the condensation of (S)-aspartate-beta-semialdehyde [(S)-ASA] and pyruvate to 4-hydroxy-tetrahydrodipicolinate (HTPA). This chain is 4-hydroxy-tetrahydrodipicolinate synthase, found in Chlamydia felis (strain Fe/C-56) (Chlamydophila felis).